Reading from the N-terminus, the 346-residue chain is Melanoma-associated antigen B3 (346 aa).

The segment at 1 to 35 (MPRGQKSTLHAREKRQQTRGQTQDHQGAQITATNK) is disordered. Residues 18–33 (TRGQTQDHQGAQITAT) show a composition bias toward polar residues. One can recognise an MAGE domain in the interval 111-310 (LIMKTNMLVQ…SAFQFWYEEA (200 aa)).

As to expression, expressed in testis.

In Homo sapiens (Human), this protein is Melanoma-associated antigen B3 (MAGEB3).